The chain runs to 415 residues: Transfer protein TraSA (415 aa).

Residues 127-326 (DGAVHYRDYR…HRVNDETSAN (200 aa)) enclose the FtsK domain. Residue 145-152 (GATESGKS) participates in ATP binding.

The chain is Transfer protein TraSA (traSA) from Streptomyces ambofaciens.